We begin with the raw amino-acid sequence, 361 residues long: Protein RecA (361 aa).

77-84 (GPESSGKT) contacts ATP.

It belongs to the RecA family.

Its subcellular location is the cytoplasm. Can catalyze the hydrolysis of ATP in the presence of single-stranded DNA, the ATP-dependent uptake of single-stranded DNA by duplex DNA, and the ATP-dependent hybridization of homologous single-stranded DNAs. It interacts with LexA causing its activation and leading to its autocatalytic cleavage. The chain is Protein RecA from Brucella abortus (strain S19).